Here is a 266-residue protein sequence, read N- to C-terminus: Phosphate import ATP-binding protein PstB 2 (266 aa).

Residues 13-252 (LEAQGVNVYY…GPTEEIFQNP (240 aa)) form the ABC transporter domain. 45–52 (GPSGCGKS) provides a ligand contact to ATP.

Belongs to the ABC transporter superfamily. Phosphate importer (TC 3.A.1.7) family. As to quaternary structure, the complex is composed of two ATP-binding proteins (PstB), two transmembrane proteins (PstC and PstA) and a solute-binding protein (PstS).

The protein localises to the cell inner membrane. The enzyme catalyses phosphate(out) + ATP + H2O = ADP + 2 phosphate(in) + H(+). In terms of biological role, part of the ABC transporter complex PstSACB involved in phosphate import. Responsible for energy coupling to the transport system. The protein is Phosphate import ATP-binding protein PstB 2 of Synechocystis sp. (strain ATCC 27184 / PCC 6803 / Kazusa).